The sequence spans 369 residues: Serine/threonine-protein phosphatase PP2A-1 catalytic subunit (369 aa).

The interval methionine 1–serine 57 is disordered. Positions 117, 119, 145, and 177 each coordinate Mn(2+). Catalysis depends on histidine 178, which acts as the Proton donor. Mn(2+) contacts are provided by histidine 227 and histidine 301. A disordered region spans residues glutamine 348–leucine 369. Leucine 369 carries the post-translational modification Leucine methyl ester.

This sequence belongs to the PPP phosphatase family. PP-2A subfamily. As to quaternary structure, inactivated in a complex with phosphatase methylesterase PPE1 (PP2Ai). Interacts with phosphatase 2A activator RRD2, which can reactivate PP2Ai by dissociating the catalytic subunit from the complex. Forms a ternary complex with RRD2-TAP42. Mn(2+) serves as cofactor. Reversibly methyl esterified on Leu-369 by leucine carboxyl methyltransferase 1 (PPM1) and protein phosphatase methylesterase 1 (PPE1). Carboxyl methylation influences the affinity of the catalytic subunit for the different regulatory subunits, thereby modulating the PP2A holoenzyme's substrate specificity, enzyme activity and cellular localization.

It catalyses the reaction O-phospho-L-seryl-[protein] + H2O = L-seryl-[protein] + phosphate. The enzyme catalyses O-phospho-L-threonyl-[protein] + H2O = L-threonyl-[protein] + phosphate. Functionally, exact function not known, phosphatase 2A performs an essential cellular function. In Saccharomyces cerevisiae (strain ATCC 204508 / S288c) (Baker's yeast), this protein is Serine/threonine-protein phosphatase PP2A-1 catalytic subunit (PPH21).